Here is a 355-residue protein sequence, read N- to C-terminus: S-adenosylmethionine:tRNA ribosyltransferase-isomerase (355 aa).

Belongs to the QueA family. As to quaternary structure, monomer.

It is found in the cytoplasm. The enzyme catalyses 7-aminomethyl-7-carbaguanosine(34) in tRNA + S-adenosyl-L-methionine = epoxyqueuosine(34) in tRNA + adenine + L-methionine + 2 H(+). It functions in the pathway tRNA modification; tRNA-queuosine biosynthesis. Its function is as follows. Transfers and isomerizes the ribose moiety from AdoMet to the 7-aminomethyl group of 7-deazaguanine (preQ1-tRNA) to give epoxyqueuosine (oQ-tRNA). The polypeptide is S-adenosylmethionine:tRNA ribosyltransferase-isomerase (Jannaschia sp. (strain CCS1)).